The following is a 484-amino-acid chain: Bifunctional protein GlmU (484 aa).

The interval 1-240 is pyrophosphorylase; sequence MSASRPAAVM…RTEVEGVNDR (240 aa). Residues 12-15, Lys26, Gln79, and 84-85 each bind UDP-N-acetyl-alpha-D-glucosamine; these read LAAG and GT. Asp113 lines the Mg(2+) pocket. Positions 150, 165, 180, and 238 each coordinate UDP-N-acetyl-alpha-D-glucosamine. Residue Asn238 coordinates Mg(2+). The segment at 241–261 is linker; it reads VQLAEARRLLNARLLEQLMRD. Residues 262–484 form an N-acetyltransferase region; sequence GVTVVDPAST…RARARSEEDR (223 aa). UDP-N-acetyl-alpha-D-glucosamine is bound by residues Arg343 and Lys361. The Proton acceptor role is filled by His373. Residues Tyr376 and Asn387 each coordinate UDP-N-acetyl-alpha-D-glucosamine. Acetyl-CoA contacts are provided by residues Ala390, 396–397, Ser415, and Ala433; that span reads NY. Residues 457-484 are disordered; sequence EGWVERKRPGTPAAQAAERARARSEEDR. Basic and acidic residues predominate over residues 474–484; it reads ERARARSEEDR.

In the N-terminal section; belongs to the N-acetylglucosamine-1-phosphate uridyltransferase family. This sequence in the C-terminal section; belongs to the transferase hexapeptide repeat family. Homotrimer. The cofactor is Mg(2+).

It localises to the cytoplasm. It carries out the reaction alpha-D-glucosamine 1-phosphate + acetyl-CoA = N-acetyl-alpha-D-glucosamine 1-phosphate + CoA + H(+). The catalysed reaction is N-acetyl-alpha-D-glucosamine 1-phosphate + UTP + H(+) = UDP-N-acetyl-alpha-D-glucosamine + diphosphate. It participates in nucleotide-sugar biosynthesis; UDP-N-acetyl-alpha-D-glucosamine biosynthesis; N-acetyl-alpha-D-glucosamine 1-phosphate from alpha-D-glucosamine 6-phosphate (route II): step 2/2. Its pathway is nucleotide-sugar biosynthesis; UDP-N-acetyl-alpha-D-glucosamine biosynthesis; UDP-N-acetyl-alpha-D-glucosamine from N-acetyl-alpha-D-glucosamine 1-phosphate: step 1/1. It functions in the pathway bacterial outer membrane biogenesis; LPS lipid A biosynthesis. Its function is as follows. Catalyzes the last two sequential reactions in the de novo biosynthetic pathway for UDP-N-acetylglucosamine (UDP-GlcNAc). The C-terminal domain catalyzes the transfer of acetyl group from acetyl coenzyme A to glucosamine-1-phosphate (GlcN-1-P) to produce N-acetylglucosamine-1-phosphate (GlcNAc-1-P), which is converted into UDP-GlcNAc by the transfer of uridine 5-monophosphate (from uridine 5-triphosphate), a reaction catalyzed by the N-terminal domain. The protein is Bifunctional protein GlmU of Thermobifida fusca (strain YX).